Here is a 147-residue protein sequence, read N- to C-terminus: Cytochrome c-type biogenesis protein CcmE 1 (147 aa).

Topologically, residues 1-9 (MKSLKKQRR) are cytoplasmic. Residues 10–30 (IQVIILATVALVLATGLIGYA) form a helical; Signal-anchor for type II membrane protein membrane-spanning segment. Residues 31-147 (MRDGINFFRA…EQGVYQAPES (117 aa)) are Periplasmic-facing. 2 residues coordinate heme: His123 and Tyr127.

This sequence belongs to the CcmE/CycJ family.

It is found in the cell inner membrane. Its function is as follows. Heme chaperone required for the biogenesis of c-type cytochromes. Transiently binds heme delivered by CcmC and transfers the heme to apo-cytochromes in a process facilitated by CcmF and CcmH. The protein is Cytochrome c-type biogenesis protein CcmE 1 of Ruegeria pomeroyi (strain ATCC 700808 / DSM 15171 / DSS-3) (Silicibacter pomeroyi).